The primary structure comprises 1098 residues: MLNGLTRVSTSSELESILDIVQSSGEIAVVFTSPSIGDLETIASETQRRQLRIAGIPRGGYTILPAIPLYDDELLQMCERYTAANEYEKAEMRNSLYMREYPLFAYSMRHQRALFHPADYVSRILQFCSYYVQAPDADVLSLQDRSPFLHISPIKEICTQLRLIARGTPVAASDSESPVPEQLRLHAESDVEKLAAERATAMSIAASSGGASETEQLSLFSGVAPSALFQKDAVEEVNKDAEDTMEDLTGEETVDAVHSFQAEYLTLDGFELVTKASIFYDREGEGQCIVAVYIPGGVPEDTCRAAAAVLEPAATKKNLRAPTNGGLPPDTGIVGYYDYLTNPTQHKCRETEFSRRNWGLLAQSEPLLKHLDKLYSQLAPMHHHLQRVAIPSQYQLCGTVFSTITVNRNFRTAVHTDRGDFRSGLGVLSVINGEFEGCHLAIKRLKKAFQLKVGDVLLFDTSLEHGNTEVVNPEIHWQRTSVVCYLRTGLMSSVCEMERRKHLNRLILEQLLNTEVRNTTVNINGADSSLPPLFVPTRLASHLAPVQLAALGFIVERTEKQSGCVVAMTMGLGKTLVALTLCFSQLYLAPQADILILTPKPIISHWVDEKNKWGMHGLHFPHFVASDGLNSLEFEQQLLEYERQKNNEKPKSGHIFVINGEYLAGFLRRFKRFTPLVMIVDEGHRVAAKGNKLTESLDRLRCNLRIVLSGTPLQNDASELYRLVGWVNKGVSRVLPPKRFQELANDINQFVEGDDGAFYNAVVAQEYIQDWMRGFVFREMENDLPPLHDYLLICGSSDVQREYEEKLGLTETAMTALKATEHRPHHLSTHPACYLAFISDSYQSMVSGWTVRALSNTSRQRVSQLEEIDTMRLEQYVQLVENEQLDAFIDLSGKMRVLVDIVLRVQARKEKLIVFSLYVGSQDLIHRTLTALRVCTFTVRGRDSQDRRRRAMQEFSENKDLIVLVLSTKIAAYGLDFTAANHVVLFDSWWNPQVDAQAIARAYRRNQRKPVTVYRLISATENKFVLRSQTRKIALFKCILHERTSRQALPDELEDCAANEKDEERRNFWAKLKMTSLAGDTRALLNVYRYQESVRESE.

The segment at 1-540 (MLNGLTRVST…PPLFVPTRLA (540 aa)) is thymine dioxygenase. 3 residues coordinate Fe cation: H415, D417, and H465. R479 is a 2-oxoglutarate binding site. The tract at residues 541–1098 (SHLAPVQLAA…RYQESVRESE (558 aa)) is DNA Helicase. The 176-residue stretch at 555–730 (VERTEKQSGC…YRLVGWVNKG (176 aa)) folds into the Helicase ATP-binding domain. Residue 568–575 (MTMGLGKT) participates in ATP binding. The DEAH box motif lies at 681–684 (DEGH). The 161-residue stretch at 897–1057 (VLVDIVLRVQ…ALPDELEDCA (161 aa)) folds into the Helicase C-terminal domain.

This sequence in the C-terminal section; belongs to the SNF2/RAD54 helicase family. In the N-terminal section; belongs to the TET family. JBP2 subfamily. It depends on Fe(2+) as a cofactor.

The protein resides in the nucleus. It carries out the reaction ATP + H2O = ADP + phosphate + H(+). The enzyme catalyses thymine + 2-oxoglutarate + O2 = 5-hydroxymethyluracil + succinate + CO2. Functionally, dioxygenase that catalyzes the first step of DNA base J (beta-d-glucosyl-HOMedU) biosynthesis by converting thymine to 5-hydroxymethyluracil (HOMedU). DNA base J is a hypermodified thymidine residue found in the genome of kinetoplastid parasites, which is localized primarily to repetitive DNA, namely the telomeres, and is implicated in the regulation of antigenic variation. Probably also acts as a DNA helicase. Recognizes and binds specific regions of the genome, hydrolyzes ATP and allows the DNA base J de novo synthesis. Involved in initial synthesis of DNA base J, JBP1 being able to act via the basal level of DNA base J and propagate further synthesis. In contrast to JBP1, it does not specifically bind DNA base J, however it binds chromatin. The chain is Bifunctional helicase and thymine dioxygenase JBP2 (JBP2) from Leishmania major.